A 271-amino-acid chain; its full sequence is Zinc finger CCHC domain-containing protein 9 (271 aa).

The segment at 1-67 is disordered; it reads MTRWARVTTS…RKKNKKKKEY (67 aa). Residues 7-20 are compositionally biased toward polar residues; the sequence is VTTSNSKRPLSATS. A compositionally biased stretch (basic and acidic residues) spans 22–33; the sequence is EDMKKGSVERAD. The segment covering 35–46 has biased composition (polar residues); the sequence is SLPNRKQCQSSR. Residues 56-65 are compositionally biased toward basic residues; sequence AKRKKNKKKK. CCHC-type zinc fingers lie at residues 128 to 145, 155 to 172, 184 to 201, and 211 to 228; these read MVCFHCRQPGHGIADCPA, GICYRCGSTEHEMSKCRA, AKCFVCGEMGHLSRSCPD, and GSCKLCGSVEHFKKDCRE.

As to expression, detected in brain cortex and in testis.

The protein resides in the nucleus. Its subcellular location is the nucleolus. Its function is as follows. May down-regulate transcription mediated by NF-kappa-B and the serum response element. The polypeptide is Zinc finger CCHC domain-containing protein 9 (Zcchc9) (Mus musculus (Mouse)).